The chain runs to 215 residues: Glycerol-3-phosphate acyltransferase (215 aa).

6 consecutive transmembrane segments (helical) span residues 3-23, 42-61, 68-90, 110-130, 134-154, and 162-182; these read LILLILTAYLLGSIPTGLWIG, TNTFRILGLKAGAATLLIDI, TLLPVLVGASNISPITIGFFAVL, AGVLLGFAPLYLLFLAAVFVL, LFSMISLASLTASVVAVISVL, and LLPSYDWLLTITIVVLAAIII.

It belongs to the PlsY family. Probably interacts with PlsX.

It is found in the cell membrane. It carries out the reaction an acyl phosphate + sn-glycerol 3-phosphate = a 1-acyl-sn-glycero-3-phosphate + phosphate. It functions in the pathway lipid metabolism; phospholipid metabolism. Its function is as follows. Catalyzes the transfer of an acyl group from acyl-phosphate (acyl-PO(4)) to glycerol-3-phosphate (G3P) to form lysophosphatidic acid (LPA). This enzyme utilizes acyl-phosphate as fatty acyl donor, but not acyl-CoA or acyl-ACP. This is Glycerol-3-phosphate acyltransferase from Streptococcus equi subsp. equi (strain 4047).